Reading from the N-terminus, the 69-residue chain is Mu-conotoxin-like Am3.3 (69 aa).

Positions 1 to 20 (MMSKLGVLLTICLLLFPLTA) are cleaved as a signal peptide. A propeptide spanning residues 21–52 (VPLDGDQPADRPAERMQDDISSENHPMFDAIR) is cleaved from the precursor. Cys-68 bears the Cysteine amide mark.

This sequence belongs to the conotoxin M family. In terms of processing, is not hydroxylated. Contains 3 disulfide bonds. Expressed by the venom duct.

Its subcellular location is the secreted. Its function is as follows. Mu-conotoxins block voltage-gated sodium channels (Nav). The chain is Mu-conotoxin-like Am3.3 from Conus amadis (Amadis cone).